An 859-amino-acid chain; its full sequence is Alanine--tRNA ligase (859 aa).

4 residues coordinate Zn(2+): His562, His566, Cys664, and His668.

It belongs to the class-II aminoacyl-tRNA synthetase family. The cofactor is Zn(2+).

The protein localises to the cytoplasm. The enzyme catalyses tRNA(Ala) + L-alanine + ATP = L-alanyl-tRNA(Ala) + AMP + diphosphate. Its function is as follows. Catalyzes the attachment of alanine to tRNA(Ala) in a two-step reaction: alanine is first activated by ATP to form Ala-AMP and then transferred to the acceptor end of tRNA(Ala). Also edits incorrectly charged Ser-tRNA(Ala) and Gly-tRNA(Ala) via its editing domain. The protein is Alanine--tRNA ligase of Aliivibrio fischeri (strain ATCC 700601 / ES114) (Vibrio fischeri).